The primary structure comprises 74 residues: Kappa-scoloptoxin(07)-Ssm2f (74 aa).

The signal sequence occupies residues 1 to 19 (MLVFYAILFVTVFSNTVMG). Positions 20–41 (ATIDKPIPKPIFREAIEEMEVN) are excised as a propeptide.

The protein belongs to the scoloptoxin-07 family. In terms of processing, contains 3 disulfide bonds. Expressed by the venom gland.

It localises to the secreted. Inhibits voltage-gated potassium channels. This Scolopendra mutilans (Chinese red-headed centipede) protein is Kappa-scoloptoxin(07)-Ssm2f.